Reading from the N-terminus, the 252-residue chain is MTAHAPDPIHQFEVSRLIKISIGNMDLSFTNVSLFTVVTVVITAAFLFISSSSRGLVPTRMQSLSEMAYEFVASTLRESSGVQGMQFFPLVFSLFTFILVANFIGLFPYFYTVTSQIMITFSLAMVVILTVIGYGFYKHGISFLKLFVPSGVPVVVLPLVTMIEIISFLSRPISLSLRLFANMLAGHITLKVFAGFIVSMIGVGIVGVGGAVLPLIMTVAITALEFLVAFLQAYVFTVLTCMYLNDAIHPGH.

Transmembrane regions (helical) follow at residues 29-49 (FTNVSLFTVVTVVITAAFLFI), 87-107 (FFPLVFSLFTFILVANFIGLF), 117-137 (IMITFSLAMVVILTVIGYGFY), 146-166 (LFVPSGVPVVVLPLVTMIEII), 196-216 (FIVSMIGVGIVGVGGAVLPLI), and 219-239 (VAITALEFLVAFLQAYVFTVL).

It belongs to the ATPase A chain family. In terms of assembly, F-type ATPases have 2 components, CF(1) - the catalytic core - and CF(0) - the membrane proton channel. CF(1) has five subunits: alpha(3), beta(3), gamma(1), delta(1), epsilon(1). CF(0) has three main subunits: a(1), b(2) and c(9-12). The alpha and beta chains form an alternating ring which encloses part of the gamma chain. CF(1) is attached to CF(0) by a central stalk formed by the gamma and epsilon chains, while a peripheral stalk is formed by the delta and b chains.

The protein resides in the cell inner membrane. Functionally, key component of the proton channel; it plays a direct role in the translocation of protons across the membrane. The protein is ATP synthase subunit a of Bartonella tribocorum (strain CIP 105476 / IBS 506).